The chain runs to 61 residues: Putative defensin-like protein 72 (61 aa).

4 disulfides stabilise this stretch: cysteine 21-cysteine 59, cysteine 25-cysteine 48, cysteine 34-cysteine 57, and cysteine 38-cysteine 58.

Belongs to the DEFL family.

This Arabidopsis thaliana (Mouse-ear cress) protein is Putative defensin-like protein 72.